The sequence spans 86 residues: Putative antitoxin VapB36 (86 aa).

Its function is as follows. Possibly the antitoxin component of a type II toxin-antitoxin (TA) system. Its cognate toxin is VapC36 (Potential). This Mycobacterium tuberculosis (strain CDC 1551 / Oshkosh) protein is Putative antitoxin VapB36 (vapB36).